The sequence spans 638 residues: Sodium- and chloride-dependent glycine transporter 1 (638 aa).

Residues 1–29 are disordered; that stretch reads MAAAQGPVAPSSLEQNGAVPSEATKKDQN. At 1–40 the chain is on the cytoplasmic side; the sequence is MAAAQGPVAPSSLEQNGAVPSEATKKDQNLKRGNWGNQIE. The next 3 helical transmembrane spans lie at 41–61, 69–88, and 112–132; these read FVLT…FPYL, AFMF…LFFM, and GVGY…NVVI. Residues 133–219 lie on the Extracellular side of the membrane; sequence CIAFYYFFSS…DDIGNFGEVR (87 aa). Residues asparagine 169, asparagine 172, asparagine 182, and asparagine 188 are each glycosylated (N-linked (GlcNAc...) asparagine). 9 helical membrane-spanning segments follow: residues 220-238, 247-264, 300-317, 329-350, 383-402, 431-449, 465-485, 506-525, and 544-562; these read LPLL…LCLI, VVYF…ILFI, IFYS…MASY, VIIS…FSIL, LPIS…LLGL, YVTL…PLTS, SFSL…IYGH, ICWR…FSVI, and IGFL…YALF. The Cytoplasmic portion of the chain corresponds to 563 to 638; sequence QFCRTDGDTL…GSSRFQDSRI (76 aa). The segment at 597–638 is disordered; the sequence is RYAPTTTPSPEDGLEVQPLHPDKAQIPMVGSNGSSRFQDSRI. Threonine 603 bears the Phosphothreonine mark. Residues serine 605 and serine 630 each carry the phosphoserine modification. The tract at residues 627-638 is essential for interaction with EXOC1; it reads SNGSSRFQDSRI. Residues 627–638 show a composition bias toward polar residues; the sequence is SNGSSRFQDSRI.

This sequence belongs to the sodium:neurotransmitter symporter (SNF) (TC 2.A.22) family. SLC6A9 subfamily. Interacts with EXOC1; interaction increases the transporter capacity of SLC6A9 probably by promoting its insertion into the cell membrane. Interacts with EXOC3 and EXOC4.

The protein localises to the cell membrane. It carries out the reaction glycine(out) + chloride(out) + 2 Na(+)(out) = glycine(in) + chloride(in) + 2 Na(+)(in). Its function is as follows. Sodium- and chloride-dependent glycine transporter which is essential for regulating glycine concentrations at inhibitory glycinergic synapses. The protein is Sodium- and chloride-dependent glycine transporter 1 (SLC6A9) of Bos taurus (Bovine).